Here is a 338-residue protein sequence, read N- to C-terminus: Very-long-chain 3-oxoacyl-CoA reductase (338 aa).

Residues 20–40 traverse the membrane as a helical segment; the sequence is LSAFLLVMGSIGVGRVIYQTL. NADP(+)-binding residues include V66, N95, D120, N147, Y214, K218, V247, and S249. Y214 serves as the catalytic Proton donor. K218 functions as the Lowers pKa of active site Tyr in the catalytic mechanism.

Belongs to the short-chain dehydrogenases/reductases (SDR) family.

The protein resides in the endoplasmic reticulum membrane. It carries out the reaction a very-long-chain (3R)-3-hydroxyacyl-CoA + NADP(+) = a very-long-chain 3-oxoacyl-CoA + NADPH + H(+). It participates in lipid metabolism; fatty acid biosynthesis. Component of the microsomal membrane bound fatty acid elongation system, which produces the 26-carbon very long-chain fatty acids (VLCFA) from palmitate. Catalyzes the reduction of the 3-ketoacyl-CoA intermediate that is formed in each cycle of fatty acid elongation. VLCFAs serve as precursors for ceramide and sphingolipids. This is Very-long-chain 3-oxoacyl-CoA reductase from Laccaria bicolor (strain S238N-H82 / ATCC MYA-4686) (Bicoloured deceiver).